Here is a 158-residue protein sequence, read N- to C-terminus: Snaclec jerdonuxin subunit alpha (158 aa).

An N-terminal signal peptide occupies residues 1–23; the sequence is MGRFTFVSFGLLVVFLSLSGTGA. 3 cysteine pairs are disulfide-bonded: C27-C38, C55-C152, and C127-C144. The region spanning 34 to 153 is the C-type lectin domain; the sequence is YDRYCYQAFS…CGTENPFVCK (120 aa).

This sequence belongs to the snaclec family. Tetramer of 4 heterodimers of alpha and beta subunits; disulfide-linked. Expressed by the venom gland.

The protein localises to the secreted. Snaclec that strongly induces platelet aggregation, in a dose-dependent manner. The polypeptide is Snaclec jerdonuxin subunit alpha (Protobothrops jerdonii (Jerdon's pitviper)).